The sequence spans 197 residues: Negative modulator of initiation of replication (197 aa).

Interaction with DNA stretches follow at residues 100-101 (AV), 129-133 (RTRVY), and 163-169 (NTNSGRK).

This sequence belongs to the SeqA family. In terms of assembly, homodimer. Polymerizes to form helical filaments.

Its subcellular location is the cytoplasm. In terms of biological role, negative regulator of replication initiation, which contributes to regulation of DNA replication and ensures that replication initiation occurs exactly once per chromosome per cell cycle. Binds to pairs of hemimethylated GATC sequences in the oriC region, thus preventing assembly of replication proteins and re-initiation at newly replicated origins. Repression is relieved when the region becomes fully methylated. The chain is Negative modulator of initiation of replication from Haemophilus influenzae (strain ATCC 51907 / DSM 11121 / KW20 / Rd).